We begin with the raw amino-acid sequence, 75 residues long: Endogenous retrovirus group K member 10 Np9 protein (75 aa).

The segment at 21–43 (PTAPKRQRPSRTGHDDDGGFVEK) is disordered. Residues 32 to 43 (TGHDDDGGFVEK) are compositionally biased toward basic and acidic residues.

The protein localises to the nucleus. May possess a function in tumorigenesis. The chain is Endogenous retrovirus group K member 10 Np9 protein (ERVK-10) from Homo sapiens (Human).